The chain runs to 281 residues: Ribosomal protein L11 methyltransferase (281 aa).

The S-adenosyl-L-methionine site is built by threonine 133, glycine 154, aspartate 175, and asparagine 216.

This sequence belongs to the methyltransferase superfamily. PrmA family.

The protein localises to the cytoplasm. It catalyses the reaction L-lysyl-[protein] + 3 S-adenosyl-L-methionine = N(6),N(6),N(6)-trimethyl-L-lysyl-[protein] + 3 S-adenosyl-L-homocysteine + 3 H(+). In terms of biological role, methylates ribosomal protein L11. The protein is Ribosomal protein L11 methyltransferase of Campylobacter jejuni subsp. jejuni serotype O:2 (strain ATCC 700819 / NCTC 11168).